The following is a 502-amino-acid chain: Glutamate--tRNA ligase (502 aa).

A 'HIGH' region motif is present at residues 9-19 (PSPTGFPHVGT). Positions 250-254 (KLSKR) match the 'KMSKS' region motif. Position 253 (lysine 253) interacts with ATP.

This sequence belongs to the class-I aminoacyl-tRNA synthetase family. Glutamate--tRNA ligase type 1 subfamily. In terms of assembly, monomer.

The protein localises to the cytoplasm. The catalysed reaction is tRNA(Glu) + L-glutamate + ATP = L-glutamyl-tRNA(Glu) + AMP + diphosphate. Catalyzes the attachment of glutamate to tRNA(Glu) in a two-step reaction: glutamate is first activated by ATP to form Glu-AMP and then transferred to the acceptor end of tRNA(Glu). The chain is Glutamate--tRNA ligase from Acinetobacter baylyi (strain ATCC 33305 / BD413 / ADP1).